The following is a 321-amino-acid chain: Cytochrome c biogenesis protein CcsA (321 aa).

The next 7 helical transmembrane spans lie at 9-29, 44-64, 68-88, 143-163, 225-245, 259-273, and 288-308; these read ILTH…LITL, GMIA…VSSG, LSNL…LHTI, MLLS…LLII, VISL…VWAN, TWAF…IYLH, and VASI…LLGI.

This sequence belongs to the CcmF/CycK/Ccl1/NrfE/CcsA family. May interact with Ccs1.

It is found in the plastid. The protein resides in the chloroplast thylakoid membrane. Its function is as follows. Required during biogenesis of c-type cytochromes (cytochrome c6 and cytochrome f) at the step of heme attachment. The sequence is that of Cytochrome c biogenesis protein CcsA from Saccharum hybrid (Sugarcane).